We begin with the raw amino-acid sequence, 87 residues long: Small ribosomal subunit protein uS17 (87 aa).

The protein belongs to the universal ribosomal protein uS17 family. In terms of assembly, part of the 30S ribosomal subunit.

In terms of biological role, one of the primary rRNA binding proteins, it binds specifically to the 5'-end of 16S ribosomal RNA. This is Small ribosomal subunit protein uS17 from Macrococcus caseolyticus (strain JCSC5402) (Macrococcoides caseolyticum).